Here is a 124-residue protein sequence, read N- to C-terminus: UPF0538 protein (124 aa).

The protein belongs to the UPF0538 family.

In Dictyostelium discoideum (Social amoeba), this protein is UPF0538 protein.